A 201-amino-acid chain; its full sequence is Alanine--tRNA ligase (201 aa).

Belongs to the class-II aminoacyl-tRNA synthetase family. It depends on Zn(2+) as a cofactor.

Its subcellular location is the cytoplasm. It catalyses the reaction tRNA(Ala) + L-alanine + ATP = L-alanyl-tRNA(Ala) + AMP + diphosphate. In terms of biological role, catalyzes the attachment of alanine to tRNA(Ala) in a two-step reaction: alanine is first activated by ATP to form Ala-AMP and then transferred to the acceptor end of tRNA(Ala). Also edits incorrectly charged Ser-tRNA(Ala) and Gly-tRNA(Ala) via its editing domain. This chain is Alanine--tRNA ligase (alaS), found in Rhizobium leguminosarum bv. viciae.